The primary structure comprises 627 residues: Dual specificity testis-specific protein kinase 1 (627 aa).

Residues 1-36 form a disordered region; sequence MAGERPPLRGPGPGEAPGEGPGGAGGGPGRGRPSSY. The segment covering 11 to 30 has biased composition (gly residues); the sequence is PGPGEAPGEGPGGAGGGPGR. The 258-residue stretch at 52 to 309 folds into the Protein kinase domain; it reads FDCAEKIGAG…TEITQHLEQI (258 aa). ATP contacts are provided by residues 58 to 66 and lysine 81; that span reads IGAGFFSEV. Aspartate 170 functions as the Proton acceptor in the catalytic mechanism. Serine 215 bears the Phosphoserine; by autocatalysis mark. Low complexity predominate over residues 316-330; sequence ATPLAKPPLTKAPLT. 4 disordered regions span residues 316–373, 436–485, 500–519, and 532–565; these read ATPL…SWGD, RCRS…GLAP, CSSASQPWSPRSGPPLNNNP, and REPWNRAQHSLPRAAALERTEPSPPPSAPREPEE. At arginine 338 the chain carries Omega-N-methylarginine. The segment covering 348 to 357 has biased composition (basic and acidic residues); the sequence is PDPRLSRSRS. The interval 421–525 is required for interaction with YWHAB; that stretch reads VTTPDILVQP…NNNPPAVVVN (105 aa). A required for interaction with PARVA region spans residues 528–625; it reads QGWAREPWNR…PTPSLQLPGA (98 aa). Residues 528-627 are required for interaction with SPRED1 and SPRY2. Required for TESK1-mediated dephosphorylation of SPRY2 and SPRY2 inhibition of ERK phosphorylation; it reads QGWAREPWNR…PSLQLPGARS (100 aa).

Belongs to the protein kinase superfamily. TKL Ser/Thr protein kinase family. In terms of assembly, interacts (via both C- and N-termini) with SPRY4 (via C-terminus); the interaction inhibits TESK1 kinase activity. Interacts with TAOK1; the interaction inhibits TAOK1 kinase activity. Interacts (via C-terminus) with SPRED1 (via C-terminus); the interaction inhibits TESK1 kinase activity. Interacts (via C-terminus) with PARVA/PARVIN (via C-terminus); the interaction inhibits TESK1 kinase activity. Interacts with YWHAB/14-3-3 beta; the interaction is dependent on the phosphorylation of TESK1 Ser-439 and inhibits TESK1 kinase activity. Interacts with SPRY1, SPRY3 and SPRED2. Interacts (via C-terminus) with SPRY2 (via C-terminus); the interaction disrupts SPRY2 interaction with PPP2CA/PP2A-C, possibly by vesicular sequestration of SPRY2. Therefore dephosphorylation of SPRY2 by the serine/threonine-protein phosphatase 2A (PP2A) holoenzyme is lost, inhibiting its interaction with GRB2. Mg(2+) is required as a cofactor. It depends on Mn(2+) as a cofactor. In terms of processing, autophosphorylated on serine and tyrosine residues. Expressed in testes and brain (at protein level).

The protein localises to the cytoplasm. The protein resides in the perinuclear region. It is found in the cytoskeleton. Its subcellular location is the microtubule organizing center. It localises to the centrosome. The protein localises to the cell projection. The protein resides in the lamellipodium. It carries out the reaction L-seryl-[protein] + ATP = O-phospho-L-seryl-[protein] + ADP + H(+). It catalyses the reaction L-threonyl-[protein] + ATP = O-phospho-L-threonyl-[protein] + ADP + H(+). The enzyme catalyses L-tyrosyl-[protein] + ATP = O-phospho-L-tyrosyl-[protein] + ADP + H(+). Activated by autophosphorylation on Ser-215. Kinase activity is inhibited by SPRED1. In terms of biological role, dual specificity protein kinase activity catalyzing autophosphorylation and phosphorylation of exogenous substrates on both serine/threonine and tyrosine residues. Regulates the cellular cytoskeleton by enhancing actin stress fiber formation via phosphorylation of cofilin and by preventing microtubule breakdown via inhibition of TAOK1/MARKK kinase activity. Inhibits podocyte motility via regulation of actin cytoskeletal dynamics and phosphorylation of CFL1. Positively regulates integrin-mediated cell spreading, via phosphorylation of cofilin. Suppresses ciliogenesis via multiple pathways; phosphorylation of CFL1, suppression of ciliary vesicle directional trafficking to the ciliary base, and by facilitating YAP1 nuclear localization where it acts as a transcriptional corepressor of the TEAD4 target genes AURKA and PLK1. Probably plays a central role at and after the meiotic phase of spermatogenesis. The sequence is that of Dual specificity testis-specific protein kinase 1 (Tesk1) from Mus musculus (Mouse).